Consider the following 770-residue polypeptide: Amyloid-beta precursor protein (770 aa).

An N-terminal signal peptide occupies residues 1-17 (MLPSLALLLLAAWTVRA). Residues 18–701 (LEVPTDGNAG…AEDVGSNKGA (684 aa)) lie on the Extracellular side of the membrane. A GFLD subdomain region spans residues 28-123 (LLAEPQIAMF…PYRCLVGEFV (96 aa)). One can recognise an E1 domain in the interval 28-189 (LLAEPQIAMF…RGVEFVCCPL (162 aa)). 6 disulfides stabilise this stretch: Cys38/Cys62, Cys73/Cys117, Cys98/Cys105, Cys133/Cys187, Cys144/Cys174, and Cys158/Cys186. 96–110 (NWCKRGRKQCKTHTH) contacts heparin. The tract at residues 131-189 (DKCKFLHQERMDVCETHLHWHTVAKETCSEKSTNLHDYGMLLPCGIDKFRGVEFVCCPL) is cuBD subdomain. Residues His147, His151, and Tyr168 each coordinate Cu(2+). Residues 181–188 (GVEFVCCP) are zinc-binding. Residues Glu183, Cys186, and Cys187 each contribute to the Zn(2+) site. Over residues 193–207 (SDSVDSADAEEDDSD) the composition is skewed to acidic residues. The tract at residues 193 to 284 (SDSVDSADAE…TTTTTTESVE (92 aa)) is disordered. Ser198 is subject to Phosphoserine; by CK2. Ser206 carries the post-translational modification Phosphoserine; by CK1. Sulfotyrosine is present on residues Tyr217 and Tyr262. Positions 228 to 264 (VAEEEEVADVEEEEADDDEDVEDGDEVEEEAEEPYEE) are enriched in acidic residues. Positions 268–281 (RTTSTATTTTTTTE) are enriched in low complexity. 3 disulfides stabilise this stretch: Cys291-Cys341, Cys300-Cys324, and Cys316-Cys337. The region spanning 291-341 (CSEQAETGPCRAMISRWYFDVTEGKCVPFFYGGCGGNRNNFDTEEYCMAVC) is the BPTI/Kunitz inhibitor domain. Tyr336 carries the post-translational modification Sulfotyrosine. An OX-2 motif is present at residues 344-365 (VSTQSLLKTTSEPLPQDPDKLP). One can recognise an E2 domain in the interval 374–565 (AVDKYLETPG…EEIQDEVDEL (192 aa)). Residues 391-423 (FQKAKERLEAKHRERMSQVMREWEEAERQAKNL) are heparin-binding. Ser441 is modified (phosphoserine). Positions 491–522 (FNMLKKYVRAEQKDRQHTLKHFEHVRMVDPKK) are heparin-binding. Residue Tyr497 is modified to Phosphotyrosine. The segment at 523-540 (AAQIRSQVMTHLRVIYER) is collagen-binding. Residues Asn542 and Asn571 are each glycosylated (N-linked (GlcNAc...) asparagine). His677 and His685 together coordinate Cu(2+). Zn(2+) is bound by residues His677 and His685. An interaction with PSEN1 region spans residues 695 to 722 (VGSNKGAIIGLMVGGVVIATVIVITLVM). The chain crosses the membrane as a helical span at residues 702 to 722 (IIGLMVGGVVIATVIVITLVM). Residues 723 to 770 (LKKKQYTSIHHGVVEVDAAVTPEERHLSKMQQNGYENPTYKFFEQMQN) are Cytoplasmic-facing. The Basolateral sorting signal motif lies at 724–734 (KKKQYTSIHHG). Thr729 is modified (phosphothreonine). Ser730 bears the Phosphoserine; by APP-kinase I mark. The interval 732–751 (HHGVVEVDAAVTPEERHLSK) is interaction with G(o)-alpha. Phosphothreonine; by CDK5 and MAPK10 and LRRK2 is present on Thr743. Positions 756–770 (GYENPTYKFFEQMQN) are interaction with DAB2. The segment at 756–770 (GYENPTYKFFEQMQN) is required for the interaction with KIF5B and for anterograde transport in axons. Tyr757 carries the phosphotyrosine; by ABL1 modification. A YENPXY motif; contains endocytosis signal motif is present at residues 757–762 (YENPTY). Residue Lys763 forms a Glycyl lysine isopeptide (Lys-Gly) (interchain with G-Cter in ubiquitin) linkage.

This sequence belongs to the APP family. As to quaternary structure, binds, via its C-terminus, to the PID domain of several cytoplasmic proteins, including APBB family members, the APBA family, MAPK8IP1, SHC1, NUMB and DAB1. Binding to DAB1 inhibits its serine phosphorylation. Interacts (via NPXY motif) with DAB2 (via PID domain); the interaction is impaired by tyrosine phosphorylation of the NPXY motif. Also interacts with GPCR-like protein BPP, APPBP1, IB1, KNS2 (via its TPR domains), APPBP2 (via BaSS) and DDB1. In vitro, it binds MAPT via the MT-binding domains. Associates with microtubules in the presence of ATP and in a kinesin-dependent manner. Interacts, through a C-terminal domain, with GNAO1. Amyloid-beta protein 42 binds CHRNA7 in hippocampal neurons. Amyloid-beta associates with HADH2. Interacts with ANKS1B and AGER. Interacts with CPEB1. Interacts with ITM2B. Interacts with ITM2C. Interacts with IDE. Can form homodimers; dimerization is enhanced in the presence of Cu(2+) ions. Can form homodimers; this is promoted by heparin binding. Amyloid-beta protein 40 interacts with S100A9. CTF-alpha product of APP interacts with GSAP. Isoform APP695 interacts with SORL1 (via N-terminal ectodomain); this interaction retains APP in the trans-Golgi network and reduces processing into soluble APP-alpha and amyloid-beta peptides. The C99 fragment also interacts with SORL1. Isoform APP751 interacts with SORL1. Isoform APP770 interacts with SORL1. Interacts with PLD3. Interacts with VDAC1. Interacts with NSG1; could regulate APP processing. Amyloid-beta protein 42 interacts with FPR2. Interacts with SYT7. Interacts (via transmembrane region) with PSEN1; the interaction is direct. Interacts with LRRK2. Interacts (via cytoplasmic domain) with KIF5B. Interacts (via C-terminus) with APBB2/FE65L1 (via C-terminus). Interacts (via intracellular domain) with APBB3. In terms of processing, proteolytically processed under normal cellular conditions. Cleavage either by alpha-secretase, beta-secretase or theta-secretase leads to generation and extracellular release of soluble APP peptides, S-APP-alpha and S-APP-beta, and the retention of corresponding membrane-anchored C-terminal fragments, C80, C83 and C99. Subsequent processing of C80 and C83 by gamma-secretase yields P3 peptides. This is the major secretory pathway and is non-amyloidogenic. Alternatively, presenilin/nicastrin-mediated gamma-secretase processing of C99 releases the amyloid-beta proteins, amyloid-beta protein 40 and amyloid-beta protein 42, major components of amyloid plaques, and the cytotoxic C-terminal fragments, gamma-CTF(50), gamma-CTF(57) and gamma-CTF(59). PSEN1 cleavage is more efficient with C83 than with C99 as substrate (in vitro). Amyloid-beta protein 40 and Amyloid-beta protein 42 are cleaved by ACE. Many other minor amyloid-beta peptides, amyloid-beta 1-X peptides, are found in cerebral spinal fluid (CSF) including the amyloid-beta X-15 peptides, produced from the cleavage by alpha-secretase. Proteolytically cleaved by caspases during neuronal apoptosis. Cleavage at Asp-739 by either CASP6, CASP8 or CASP9 results in the production of the neurotoxic C31 peptide and the increased production of amyloid-beta peptides. Post-translationally, N- and O-glycosylated. In terms of processing, phosphorylation in the C-terminal on tyrosine, threonine and serine residues is neuron-specific. Phosphorylation can affect APP processing, neuronal differentiation and interaction with other proteins. Phosphorylated on Thr-743 in neuronal cells by Cdc5 kinase and Mapk10, in dividing cells by Cdc2 kinase in a cell-cycle dependent manner with maximal levels at the G2/M phase and, in vitro, by GSK-3-beta. The Thr-743 phosphorylated form causes a conformational change which reduces binding of Fe65 family members. In dopaminergic (DA) neurons, phosphorylation on Thr-743 by LRKK2 promotes the production and the nuclear translocation of the APP intracellular domain (AICD) which induces DA neuron apoptosis. Phosphorylation on Tyr-757 is required for SHC binding. Phosphorylated in the extracellular domain by casein kinases on both soluble and membrane-bound APP. This phosphorylation is inhibited by heparin. Extracellular binding and reduction of copper, results in a corresponding oxidation of Cys-144 and Cys-158, and the formation of a disulfide bond. Post-translationally, trophic-factor deprivation triggers the cleavage of surface APP by beta-secretase to release sAPP-beta which is further cleaved to release an N-terminal fragment of APP (N-APP). In terms of processing, amyloid-beta peptides are degraded by IDE. Sulfated on tyrosine residues. In terms of tissue distribution, expressed in the brain with expression in cortex, cerebellum, hippocampus, olfactory bulb, neurons, astrocytes and microglia (at protein level). Expressed in the retinal lens. Expressed at a low level in muscle cells (at protein level). As to expression, expressed in kidney. Widely expressed. Expressed in several different brain regions including hippocampus, substantia nigra pars compacta and cerebellum. Within the cerebellum, abundantly expressed in Purkinje cells. In terms of tissue distribution, expressed in the brain, kidney and liver. Expressed in several different brain regions including hippocampus, substantia nigra pars compacta and cerebellum. Within the cerebellum, abundantly expressed in Purkinje cells. As to expression, expressed in several different brain regions including hippocampus, substantia nigra pars compacta and cerebellum. Within the cerebellum, abundantly expressed in Purkinje cells.

It is found in the cell membrane. It localises to the membrane. The protein localises to the perikaryon. Its subcellular location is the cell projection. The protein resides in the growth cone. It is found in the clathrin-coated pit. It localises to the early endosome. The protein localises to the cytoplasmic vesicle. Its subcellular location is the golgi apparatus. The protein resides in the trans-Golgi network. It is found in the endoplasmic reticulum. It localises to the secreted. The protein localises to the cell surface. Its subcellular location is the nucleus. The protein resides in the cytoplasm. Functions as a cell surface receptor and performs physiological functions on the surface of neurons relevant to neurite growth, neuronal adhesion and axonogenesis. Interaction between APP molecules on neighboring cells promotes synaptogenesis. Involved in cell mobility and transcription regulation through protein-protein interactions. Can promote transcription activation through binding to APBB1-KAT5 and inhibit Notch signaling through interaction with Numb. Couples to apoptosis-inducing pathways such as those mediated by G(o) and JIP. Inhibits G(o)-alpha ATPase activity. Acts as a kinesin I membrane receptor, mediating the axonal transport of beta-secretase and presenilin 1. By acting as a kinesin I membrane receptor, plays a role in axonal anterograde transport of cargo towards synapses in axons. May be involved in copper homeostasis/oxidative stress through copper ion reduction. Can regulate neurite outgrowth through binding to components of the extracellular matrix such as heparin and collagen I and IV. The splice isoforms that contain the BPTI domain possess protease inhibitor activity. Induces a AGER-dependent pathway that involves activation of p38 MAPK, resulting in internalization of amyloid-beta peptide and leading to mitochondrial dysfunction in cultured cortical neurons. Provides Cu(2+) ions for GPC1 which are required for release of nitric oxide (NO) and subsequent degradation of the heparan sulfate chains on GPC1. In terms of biological role, amyloid-beta peptides are lipophilic metal chelators with metal-reducing activity. Binds transient metals such as copper, zinc and iron. Rat and mouse amyloid-beta peptides bind only weakly transient metals and have little reducing activity due to substitutions of transient metal chelating residues. Amyloid-beta protein 42 may activate mononuclear phagocytes in the brain and elicit inflammatory responses. Promotes both tau aggregation and TPK II-mediated phosphorylation. Also binds GPC1 in lipid rafts. Functionally, the gamma-CTF peptides as well as the caspase-cleaved peptides, including C31, are potent enhancers of neuronal apoptosis. This is Amyloid-beta precursor protein from Mus musculus (Mouse).